A 734-amino-acid chain; its full sequence is Oligopeptide transporter 2 (734 aa).

The next 14 membrane-spanning stretches (helical) occupy residues 44 to 64 (MWFL…FFGY), 68 to 88 (PLMI…KLMA), 125 to 145 (GAGF…IMAF), 152 to 172 (FLAS…WAGI), 211 to 231 (FFVI…YLFL), 252 to 272 (LGSG…SVIA), 283 to 303 (FFAI…VIPI), 359 to 379 (FFAI…THVA), 414 to 434 (WWFY…CIFM), 442 to 462 (WWGL…VSII), 525 to 545 (MFLV…SVAW), 596 to 616 (YPAL…VWLL), 644 to 664 (ATSV…YFVF), and 677 to 697 (VLSA…YFSL).

Belongs to the oligopeptide OPT transporter (TC 2.A.67.1) family. Expressed in flowers, leaves, roots, and stems.

It is found in the membrane. Functionally, involved in the translocation of tetra- and pentapeptides across the cellular membrane in an energy-dependent manner. This is Oligopeptide transporter 2 (OPT2) from Arabidopsis thaliana (Mouse-ear cress).